Reading from the N-terminus, the 330-residue chain is Putative quinone oxidoreductase YhfP (330 aa).

Residues Y45, 160–163 (TGGV), 182–184 (TGN), R202, L248, I262, S273, and N320 contribute to the NADP(+) site.

Belongs to the zinc-containing alcohol dehydrogenase family. Quinone oxidoreductase subfamily. Homodimer, or homotetramer.

The protein localises to the cytoplasm. The chain is Putative quinone oxidoreductase YhfP (yhfP) from Bacillus subtilis (strain 168).